Here is a 547-residue protein sequence, read N- to C-terminus: Probable acetolactate synthase (547 aa).

Residue Glu-57 participates in thiamine diphosphate binding. FAD contacts are provided by residues Pro-159 and 299–318 (DRVE…LYGD). A thiamine pyrophosphate binding region spans residues 388–468 (DFGSYAGRMI…VVSVIGNNGI (81 aa)). Residues Asp-439 and Asn-466 each contribute to the Mg(2+) site.

The protein belongs to the TPP enzyme family. It depends on Mg(2+) as a cofactor. Requires thiamine diphosphate as cofactor.

The enzyme catalyses 2 pyruvate + H(+) = (2S)-2-acetolactate + CO2. It functions in the pathway amino-acid biosynthesis; L-isoleucine biosynthesis; L-isoleucine from 2-oxobutanoate: step 1/4. The protein operates within amino-acid biosynthesis; L-valine biosynthesis; L-valine from pyruvate: step 1/4. This chain is Probable acetolactate synthase (ilvG), found in Mycobacterium bovis (strain ATCC BAA-935 / AF2122/97).